The primary structure comprises 590 residues: Dystrobrevin-1 (590 aa).

The span at Met1–Pro10 shows a compositional bias: gly residues. The segment at Met1–Met25 is disordered. Residues Tyr259–Ser315 form a ZZ-type zinc finger. Zn(2+) contacts are provided by Cys264, Cys267, Cys279, Cys282, Cys288, Cys291, His301, and His305. Residues Ser434–Gly508 are a coiled coil. An essential for interaction with ctn-1 region spans residues Asp468–Phe590. Residues Met484 to Arg490 form an essential for interaction with dys-1 region.

Belongs to the dystrophin family. Dystrobrevin subfamily. Component of the dystrophin glycoprotein complex (DGC). Interacts with dystrophin (dys-1) and syntrophin (stn-1) to form the DGC. Interacts (via C-terminus) with ctn-1 (via N-terminus); the interaction is required for localization of the dystrophin complex and ctn-1 near dense bodies in muscle cells. As to expression, from late embryogenesis to adulthood, expressed in neurons and muscles; particularly strong in the ventral nerve cord and in muscles of the body wall, head pharyngeal, and vulva; weaker in the intestinal muscle (at protein level).

The protein localises to the cytoplasm. In terms of biological role, plays a role in cholinergic transmission and as a functional partner of dystrophin (dys-1), necessary for muscle maintenance. Required for localization of ctn-1 near dense bodies in muscle cells. This chain is Dystrobrevin-1, found in Caenorhabditis elegans.